A 279-amino-acid chain; its full sequence is Ribosomal RNA small subunit methyltransferase A (279 aa).

S-adenosyl-L-methionine is bound by residues H12, L14, G39, E60, D81, and N118.

This sequence belongs to the class I-like SAM-binding methyltransferase superfamily. rRNA adenine N(6)-methyltransferase family. RsmA subfamily.

The protein resides in the cytoplasm. The catalysed reaction is adenosine(1518)/adenosine(1519) in 16S rRNA + 4 S-adenosyl-L-methionine = N(6)-dimethyladenosine(1518)/N(6)-dimethyladenosine(1519) in 16S rRNA + 4 S-adenosyl-L-homocysteine + 4 H(+). Specifically dimethylates two adjacent adenosines (A1518 and A1519) in the loop of a conserved hairpin near the 3'-end of 16S rRNA in the 30S particle. May play a critical role in biogenesis of 30S subunits. In Polaromonas naphthalenivorans (strain CJ2), this protein is Ribosomal RNA small subunit methyltransferase A.